We begin with the raw amino-acid sequence, 563 residues long: Arginine--tRNA ligase (563 aa).

Positions 122 to 132 match the 'HIGH' region motif; that stretch reads PNIAKPISMGH.

The protein belongs to the class-I aminoacyl-tRNA synthetase family. As to quaternary structure, monomer.

The protein resides in the cytoplasm. The catalysed reaction is tRNA(Arg) + L-arginine + ATP = L-arginyl-tRNA(Arg) + AMP + diphosphate. The protein is Arginine--tRNA ligase of Latilactobacillus sakei subsp. sakei (strain 23K) (Lactobacillus sakei subsp. sakei).